A 145-amino-acid chain; its full sequence is Putative antiporter subunit mnhG2 (145 aa).

3 helical membrane-spanning segments follow: residues 11–31 (IAAV…IGIV), 51–71 (VLLT…FFSV), and 72–92 (RLLL…HLVA).

The protein belongs to the CPA3 antiporters (TC 2.A.63) subunit G family. May form a heterooligomeric complex that consists of seven subunits: mnhA2, mnhB2, mnhC2, mnhD2, mnhE2, mnhF2 and mnhG2.

It localises to the cell membrane. This chain is Putative antiporter subunit mnhG2 (mnhG2), found in Staphylococcus aureus (strain JH9).